The sequence spans 167 residues: Zymogen granule membrane protein 16 (167 aa).

Residues 1–16 (MLAVALLVLLCASASA) form the signal peptide. The Jacalin-type lectin domain occupies 24–159 (SSYSGEYGGK…IDSISLHWDT (136 aa)).

Belongs to the jacalin lectin family.

It localises to the secreted. It is found in the extracellular space. The protein localises to the extracellular matrix. Its subcellular location is the zymogen granule lumen. The protein resides in the golgi apparatus lumen. Its function is as follows. May play a role in protein trafficking. May act as a linker molecule between the submembranous matrix on the luminal side of zymogen granule membrane (ZGM) and aggregated secretory proteins during granule formation in the TGN. The protein is Zymogen granule membrane protein 16 (Zg16) of Mus musculus (Mouse).